The chain runs to 426 residues: Glutamate-1-semialdehyde 2,1-aminomutase (426 aa).

An N6-(pyridoxal phosphate)lysine modification is found at K265.

Belongs to the class-III pyridoxal-phosphate-dependent aminotransferase family. HemL subfamily. In terms of assembly, homodimer. Pyridoxal 5'-phosphate is required as a cofactor.

The protein resides in the cytoplasm. It carries out the reaction (S)-4-amino-5-oxopentanoate = 5-aminolevulinate. Its pathway is porphyrin-containing compound metabolism; protoporphyrin-IX biosynthesis; 5-aminolevulinate from L-glutamyl-tRNA(Glu): step 2/2. This Methylococcus capsulatus (strain ATCC 33009 / NCIMB 11132 / Bath) protein is Glutamate-1-semialdehyde 2,1-aminomutase.